A 249-amino-acid chain; its full sequence is Sulfate transporter CysZ (249 aa).

4 helical membrane passes run 26 to 46, 71 to 91, 150 to 170, and 206 to 226; these read LFVLLPLAINLVLFVGLIYFA, VIWPLFVVLVAFMVFFSFTML, LFILSLIPVVNLIAAPLWLLF, and LGFGGIVYLALLIPLVNILMM.

Belongs to the CysZ family.

The protein resides in the cell inner membrane. Its function is as follows. High affinity, high specificity proton-dependent sulfate transporter, which mediates sulfate uptake. Provides the sulfur source for the cysteine synthesis pathway. In Pseudomonas fluorescens (strain ATCC BAA-477 / NRRL B-23932 / Pf-5), this protein is Sulfate transporter CysZ.